A 487-amino-acid chain; its full sequence is UDP-N-acetylmuramate--L-alanine ligase (487 aa).

126–132 (GTHGKTT) is a binding site for ATP.

Belongs to the MurCDEF family.

Its subcellular location is the cytoplasm. The enzyme catalyses UDP-N-acetyl-alpha-D-muramate + L-alanine + ATP = UDP-N-acetyl-alpha-D-muramoyl-L-alanine + ADP + phosphate + H(+). It functions in the pathway cell wall biogenesis; peptidoglycan biosynthesis. Its function is as follows. Cell wall formation. The polypeptide is UDP-N-acetylmuramate--L-alanine ligase (Psychromonas ingrahamii (strain DSM 17664 / CCUG 51855 / 37)).